The chain runs to 132 residues: Holo-[acyl-carrier-protein] synthase (132 aa).

Mg(2+) contacts are provided by Asp13 and Glu63.

Belongs to the P-Pant transferase superfamily. AcpS family. It depends on Mg(2+) as a cofactor.

The protein resides in the cytoplasm. It carries out the reaction apo-[ACP] + CoA = holo-[ACP] + adenosine 3',5'-bisphosphate + H(+). Functionally, transfers the 4'-phosphopantetheine moiety from coenzyme A to a Ser of acyl-carrier-protein. The sequence is that of Holo-[acyl-carrier-protein] synthase from Gloeobacter violaceus (strain ATCC 29082 / PCC 7421).